Consider the following 320-residue polypeptide: Cyclin-H (320 aa).

Position 5 is a phosphoserine; by CDK8 (Ser-5). Ser-132 carries the post-translational modification Phosphoserine. Residue Ser-304 is modified to Phosphoserine; by CDK8.

Belongs to the cyclin family. Cyclin C subfamily. In terms of assembly, associates primarily with CDK7 and MAT1 to form the CAK complex. CAK can further associate with the core-TFIIH to form the TFIIH basal transcription factor.

The protein resides in the nucleus. Its function is as follows. Regulates CDK7, the catalytic subunit of the CDK-activating kinase (CAK) enzymatic complex. CAK activates the cyclin-associated kinases CDK1, CDK2, CDK4 and CDK6 by threonine phosphorylation. CAK complexed to the core-TFIIH basal transcription factor activates RNA polymerase II by serine phosphorylation of the repetitive C-terminal domain (CTD) of its large subunit (POLR2A), allowing its escape from the promoter and elongation of the transcripts. Involved in cell cycle control and in RNA transcription by RNA polymerase II. Its expression and activity are constant throughout the cell cycle. The sequence is that of Cyclin-H (CCNH) from Bos taurus (Bovine).